The sequence spans 179 residues: Cytoglobin-2 (179 aa).

Acidic residues predominate over residues 1–11; sequence MEKEREDEETE. The tract at residues 1-20 is disordered; that stretch reads MEKEREDEETEGRERPEPLT. A Globin domain is found at 18 to 167; the sequence is PLTDVERGII…LYWHITGAYT (150 aa). Positions 81 and 113 each coordinate heme b.

This sequence belongs to the globin family. Monomeric. As to expression, expressed in all tissues examined, with highest levels in brain and eye, and considerably lower levels in skin, gut, heart, gill, liver and muscle.

Its subcellular location is the cytoplasm. The protein localises to the nucleus. It carries out the reaction Fe(II)-heme b-[protein] + nitric oxide + O2 = Fe(III)-heme b-[protein] + nitrate. It catalyses the reaction Fe(III)-heme b-[protein] + nitric oxide + H2O = Fe(II)-heme b-[protein] + nitrite + 2 H(+). The catalysed reaction is 2 superoxide + 2 H(+) = H2O2 + O2. The enzyme catalyses H2O2 + AH2 = A + 2 H2O. Its function is as follows. Probable multifunctional globin with a hexacoordinated heme iron required for the catalysis of various reactions depending on redox condition of the cell as well as oxygen availability. Has a nitric oxide dioxygenase (NOD) activity and is most probably involved in cell-mediated and oxygen-dependent nitric oxide consumption. Under normoxic conditions functions as a nitric oxide dioxygenase (NOD) but under hypoxic conditions the globin may switch its function to that of a nitrite (NO2) reductase (NiR), generating nitric oxide. Could also have peroxidase and superoxide dismutase activities, detoxifying reactive oxygen species and protecting cells against oxidative stress. Also binds dioxygen with low affinity and could function as an oxygen sensor but has probably no function as a respiratory oxygen carrier. In Danio rerio (Zebrafish), this protein is Cytoglobin-2.